Here is a 438-residue protein sequence, read N- to C-terminus: Na(+)/H(+) antiporter NhaA (438 aa).

The next 11 helical transmembrane spans lie at 23–43 (FGGIFLFLNAVLAMVVANSFL), 62–82 (FFIGFSLHNWIDDVLMALFFL), 104–124 (SFPVIAAIGGMIAPGLIYFFL), 133–153 (GFGIPMATDIAFALGVIMLLG), 162–182 (VFLITLAVADDLGAIVVIALF), 185–205 (TNLKFAWLLGALGVVLVLAVL), 221–241 (VLLWFCVHQSGIHATIAAVIL), 302–322 (FLAPISGYFIMPLFAFANAGV), 337–357 (LGVILGLCLGKPLGIFLITFI), 372–392 (WWHILGAGLLAGIGFTMSMFI), and 410–430 (IAILLGSLISGIIGALYLFAL).

It belongs to the NhaA Na(+)/H(+) (TC 2.A.33) antiporter family.

It is found in the cell inner membrane. It carries out the reaction Na(+)(in) + 2 H(+)(out) = Na(+)(out) + 2 H(+)(in). Na(+)/H(+) antiporter that extrudes sodium in exchange for external protons. The polypeptide is Na(+)/H(+) antiporter NhaA (Helicobacter pylori (strain ATCC 700392 / 26695) (Campylobacter pylori)).